A 190-amino-acid chain; its full sequence is Elongation factor P-like protein (190 aa).

It belongs to the elongation factor P family.

This is Elongation factor P-like protein from Pectobacterium atrosepticum (strain SCRI 1043 / ATCC BAA-672) (Erwinia carotovora subsp. atroseptica).